A 208-amino-acid chain; its full sequence is Inosine triphosphate pyrophosphatase (208 aa).

An N-acetylalanine modification is found at alanine 2. 14–19 provides a ligand contact to ITP; the sequence is TGNAKK. Glutamate 44 provides a ligand contact to Mg(2+). ITP is bound by residues lysine 56, 72-73, lysine 89, 149-152, lysine 172, and 177-178; these read DT, FGWD, and HR.

Belongs to the HAM1 NTPase family. As to quaternary structure, homodimer. Mg(2+) serves as cofactor. Mn(2+) is required as a cofactor.

The protein localises to the cytoplasm. The catalysed reaction is ITP + H2O = IMP + diphosphate + H(+). It carries out the reaction dITP + H2O = dIMP + diphosphate + H(+). The enzyme catalyses XTP + H2O = XMP + diphosphate + H(+). It catalyses the reaction N(6)-hydroxy-dATP + H2O = N(6)-hydroxy-dAMP + diphosphate + H(+). Functionally, pyrophosphatase that hydrolyzes the non-canonical purine nucleotides inosine triphosphate (ITP), deoxyinosine triphosphate (dITP) as well as 2'-deoxy-N-6-hydroxylaminopurine triphosphate (dHAPTP) and xanthosine 5'-triphosphate (XTP) to their respective monophosphate derivatives. The enzyme does not distinguish between the deoxy- and ribose forms. Probably excludes non-canonical purines from RNA and DNA precursor pools, thus preventing their incorporation into RNA and DNA and avoiding chromosomal lesions. The sequence is that of Inosine triphosphate pyrophosphatase from Bos taurus (Bovine).